A 953-amino-acid chain; its full sequence is Factor arrest protein 11 (953 aa).

Phosphoserine is present on residues serine 18 and serine 81. A disordered region spans residues 104 to 160; that stretch reads DIQQDSSDENDNFKFSDDGVNKDRNNEKDNNTDNAVEFQDDAEEAEEENEDESFANV. Positions 114 to 134 are enriched in basic and acidic residues; sequence DNFKFSDDGVNKDRNNEKDNN. Over residues 141–160 the composition is skewed to acidic residues; that stretch reads FQDDAEEAEEENEDESFANV. Serine 524, serine 527, and serine 528 each carry phosphoserine.

It belongs to the FAR11 family. As to quaternary structure, component of a complex at least composed of FAR3, FAR7, FAR8, FAR10, FAR11 and VPS64.

Functionally, participates in the control of the reentry into the cell cycle following pheromone treatment. The chain is Factor arrest protein 11 (FAR11) from Saccharomyces cerevisiae (strain ATCC 204508 / S288c) (Baker's yeast).